We begin with the raw amino-acid sequence, 201 residues long: Lipoprotein signal peptidase (201 aa).

2 helical membrane-spanning segments follow: residues Ser-73–Ile-93 and Thr-97–Asp-117. Residues Asp-126 and Asp-144 contribute to the active site. A helical transmembrane segment spans residues Tyr-135–Ile-155.

This sequence belongs to the peptidase A8 family.

It is found in the cell inner membrane. The catalysed reaction is Release of signal peptides from bacterial membrane prolipoproteins. Hydrolyzes -Xaa-Yaa-Zaa-|-(S,diacylglyceryl)Cys-, in which Xaa is hydrophobic (preferably Leu), and Yaa (Ala or Ser) and Zaa (Gly or Ala) have small, neutral side chains.. Its pathway is protein modification; lipoprotein biosynthesis (signal peptide cleavage). Functionally, this protein specifically catalyzes the removal of signal peptides from prolipoproteins. The sequence is that of Lipoprotein signal peptidase from Rickettsia conorii (strain ATCC VR-613 / Malish 7).